We begin with the raw amino-acid sequence, 124 residues long: Ribonuclease pancreatic A (124 aa).

The interval 1-24 (AESSAMKFERQHVDSGGSSSSNAN) is disordered. Lys-7 and Arg-10 together coordinate substrate. The active-site Proton acceptor is the His-12. Intrachain disulfides connect Cys-26–Cys-84, Cys-40–Cys-95, Cys-58–Cys-110, and Cys-65–Cys-72. Substrate-binding positions include 41–45 (KPVNT), Lys-66, and Arg-85. His-119 (proton donor) is an active-site residue.

This sequence belongs to the pancreatic ribonuclease family. As to expression, pancreas.

The protein localises to the secreted. The catalysed reaction is an [RNA] containing cytidine + H2O = an [RNA]-3'-cytidine-3'-phosphate + a 5'-hydroxy-ribonucleotide-3'-[RNA].. It carries out the reaction an [RNA] containing uridine + H2O = an [RNA]-3'-uridine-3'-phosphate + a 5'-hydroxy-ribonucleotide-3'-[RNA].. The polypeptide is Ribonuclease pancreatic A (Cavia porcellus (Guinea pig)).